The primary structure comprises 316 residues: 33 kDa chaperonin (316 aa).

Intrachain disulfides connect cysteine 239-cysteine 241 and cysteine 272-cysteine 275.

The protein belongs to the HSP33 family. Post-translationally, under oxidizing conditions two disulfide bonds are formed involving the reactive cysteines. Under reducing conditions zinc is bound to the reactive cysteines and the protein is inactive.

The protein localises to the cytoplasm. Redox regulated molecular chaperone. Protects both thermally unfolding and oxidatively damaged proteins from irreversible aggregation. Plays an important role in the bacterial defense system toward oxidative stress. This chain is 33 kDa chaperonin, found in Clostridium perfringens (strain SM101 / Type A).